Here is a 176-residue protein sequence, read N- to C-terminus: ATP-dependent protease subunit HslV (176 aa).

Thr-2 is an active-site residue. Na(+) contacts are provided by Gly-157, Cys-160, and Thr-163.

It belongs to the peptidase T1B family. HslV subfamily. As to quaternary structure, a double ring-shaped homohexamer of HslV is capped on each side by a ring-shaped HslU homohexamer. The assembly of the HslU/HslV complex is dependent on binding of ATP.

It localises to the cytoplasm. It carries out the reaction ATP-dependent cleavage of peptide bonds with broad specificity.. Allosterically activated by HslU binding. Functionally, protease subunit of a proteasome-like degradation complex believed to be a general protein degrading machinery. In Pseudomonas putida (strain ATCC 47054 / DSM 6125 / CFBP 8728 / NCIMB 11950 / KT2440), this protein is ATP-dependent protease subunit HslV.